The chain runs to 332 residues: tRNA-dihydrouridine synthase B (332 aa).

FMN-binding positions include 16–18 and Gln70; that span reads PMA. The active-site Proton donor is the Cys100. FMN contacts are provided by residues Lys139, 200 to 202, and 224 to 225; these read NGD and GR.

It belongs to the Dus family. DusB subfamily. Requires FMN as cofactor.

It catalyses the reaction a 5,6-dihydrouridine in tRNA + NAD(+) = a uridine in tRNA + NADH + H(+). It carries out the reaction a 5,6-dihydrouridine in tRNA + NADP(+) = a uridine in tRNA + NADPH + H(+). Catalyzes the synthesis of 5,6-dihydrouridine (D), a modified base found in the D-loop of most tRNAs, via the reduction of the C5-C6 double bond in target uridines. The sequence is that of tRNA-dihydrouridine synthase B from Xanthomonas campestris pv. campestris (strain ATCC 33913 / DSM 3586 / NCPPB 528 / LMG 568 / P 25).